Consider the following 200-residue polypeptide: Probable nicotinate-nucleotide adenylyltransferase (200 aa).

Belongs to the NadD family.

The catalysed reaction is nicotinate beta-D-ribonucleotide + ATP + H(+) = deamido-NAD(+) + diphosphate. It functions in the pathway cofactor biosynthesis; NAD(+) biosynthesis; deamido-NAD(+) from nicotinate D-ribonucleotide: step 1/1. Functionally, catalyzes the reversible adenylation of nicotinate mononucleotide (NaMN) to nicotinic acid adenine dinucleotide (NaAD). This Clavibacter sepedonicus (Clavibacter michiganensis subsp. sepedonicus) protein is Probable nicotinate-nucleotide adenylyltransferase.